Reading from the N-terminus, the 145-residue chain is Fatty acid-binding protein homolog 4 (145 aa).

This sequence belongs to the calycin superfamily. Fatty-acid binding protein (FABP) family.

The protein is Fatty acid-binding protein homolog 4 (lbp-4) of Caenorhabditis elegans.